Consider the following 227-residue polypeptide: Ribonuclease 3 (227 aa).

An RNase III domain is found at 4–126 (LDRLERKIGY…IIGAMSLDQG (123 aa)). Residue Glu-39 participates in Mg(2+) binding. Residue Asp-43 is part of the active site. 2 residues coordinate Mg(2+): Asp-112 and Glu-115. Glu-115 is an active-site residue. Positions 153 to 226 (DAKTRLQEYL…AEQILKELDI (74 aa)) constitute a DRBM domain.

The protein belongs to the ribonuclease III family. As to quaternary structure, homodimer. It depends on Mg(2+) as a cofactor.

The protein resides in the cytoplasm. It carries out the reaction Endonucleolytic cleavage to 5'-phosphomonoester.. Digests double-stranded RNA. Involved in the processing of primary rRNA transcript to yield the immediate precursors to the large and small rRNAs (23S and 16S). Processes some mRNAs, and tRNAs when they are encoded in the rRNA operon. Processes pre-crRNA and tracrRNA of type II CRISPR loci if present in the organism. In Haemophilus influenzae (strain PittGG), this protein is Ribonuclease 3.